We begin with the raw amino-acid sequence, 296 residues long: Ribosomal RNA small subunit methyltransferase A (296 aa).

Residues asparagine 32, leucine 34, glycine 59, glutamate 80, aspartate 105, and asparagine 130 each coordinate S-adenosyl-L-methionine.

Belongs to the class I-like SAM-binding methyltransferase superfamily. rRNA adenine N(6)-methyltransferase family. RsmA subfamily.

The protein resides in the cytoplasm. The catalysed reaction is adenosine(1518)/adenosine(1519) in 16S rRNA + 4 S-adenosyl-L-methionine = N(6)-dimethyladenosine(1518)/N(6)-dimethyladenosine(1519) in 16S rRNA + 4 S-adenosyl-L-homocysteine + 4 H(+). Specifically dimethylates two adjacent adenosines (A1518 and A1519) in the loop of a conserved hairpin near the 3'-end of 16S rRNA in the 30S particle. May play a critical role in biogenesis of 30S subunits. This is Ribosomal RNA small subunit methyltransferase A from Ligilactobacillus salivarius (strain UCC118) (Lactobacillus salivarius).